A 119-amino-acid chain; its full sequence is Large ribosomal subunit protein bL20 (119 aa).

It belongs to the bacterial ribosomal protein bL20 family.

Its function is as follows. Binds directly to 23S ribosomal RNA and is necessary for the in vitro assembly process of the 50S ribosomal subunit. It is not involved in the protein synthesizing functions of that subunit. The polypeptide is Large ribosomal subunit protein bL20 (Teredinibacter turnerae (strain ATCC 39867 / T7901)).